The primary structure comprises 477 residues: Aspartyl/glutamyl-tRNA(Asn/Gln) amidotransferase subunit B (477 aa).

It belongs to the GatB/GatE family. GatB subfamily. In terms of assembly, heterotrimer of A, B and C subunits.

The enzyme catalyses L-glutamyl-tRNA(Gln) + L-glutamine + ATP + H2O = L-glutaminyl-tRNA(Gln) + L-glutamate + ADP + phosphate + H(+). It catalyses the reaction L-aspartyl-tRNA(Asn) + L-glutamine + ATP + H2O = L-asparaginyl-tRNA(Asn) + L-glutamate + ADP + phosphate + 2 H(+). Its function is as follows. Allows the formation of correctly charged Asn-tRNA(Asn) or Gln-tRNA(Gln) through the transamidation of misacylated Asp-tRNA(Asn) or Glu-tRNA(Gln) in organisms which lack either or both of asparaginyl-tRNA or glutaminyl-tRNA synthetases. The reaction takes place in the presence of glutamine and ATP through an activated phospho-Asp-tRNA(Asn) or phospho-Glu-tRNA(Gln). The sequence is that of Aspartyl/glutamyl-tRNA(Asn/Gln) amidotransferase subunit B from Streptococcus gordonii (strain Challis / ATCC 35105 / BCRC 15272 / CH1 / DL1 / V288).